Reading from the N-terminus, the 126-residue chain is MPEPAKSAPAPKKGSKKAVTKAQKKDGKKRKRSRKESYSVYVYKVLKRVHPDTGISSKAMGIMNSFVNDIFERIAGEASRLAHYNKRSTITSREIQTAVRLLLPGELAKHAVSEGTKAVTKYTSAK.

Low complexity predominate over residues 1-12; the sequence is MPEPAKSAPAPK. Positions 1–36 are disordered; sequence MPEPAKSAPAPKKGSKKAVTKAQKKDGKKRKRSRKE. Pro-2 carries the post-translational modification N-acetylproline. Glu-3 is subject to ADP-ribosyl glutamic acid. Position 6 is an N6-(2-hydroxyisobutyryl)lysine; alternate (Lys-6). Position 6 is an N6-(beta-hydroxybutyryl)lysine; alternate (Lys-6). At Lys-6 the chain carries N6-acetyllysine; alternate. An N6-butyryllysine; alternate modification is found at Lys-6. Lys-6 carries the post-translational modification N6-crotonyllysine; alternate. Residue Lys-6 is modified to N6-lactoyllysine; alternate. Lys-6 is covalently cross-linked (Glycyl lysine isopeptide (Lys-Gly) (interchain with G-Cter in SUMO2); alternate). Residue Ser-7 is modified to ADP-ribosylserine. An N6-(beta-hydroxybutyryl)lysine; alternate modification is found at Lys-12. An N6-acetyllysine; alternate mark is found at Lys-12 and Lys-13. An N6-crotonyllysine; alternate mark is found at Lys-12 and Lys-13. Lys-12 is modified (N6-lactoyllysine; alternate). Lys-13 carries the N6-(2-hydroxyisobutyryl)lysine; alternate modification. Position 15 is a phosphoserine; by STK4/MST1 (Ser-15). An N6-acetyllysine; alternate mark is found at Lys-16, Lys-17, Lys-21, and Lys-24. N6-crotonyllysine; alternate occurs at positions 16, 17, 21, and 24. N6-lactoyllysine; alternate is present on residues Lys-16, Lys-17, Lys-21, and Lys-24. Position 17 is an N6-glutaryllysine; alternate (Lys-17). N6-(2-hydroxyisobutyryl)lysine; alternate occurs at positions 21 and 24. Lys-21 bears the N6-(beta-hydroxybutyryl)lysine; alternate mark. Lys-21 is modified (N6-butyryllysine; alternate). A Glycyl lysine isopeptide (Lys-Gly) (interchain with G-Cter in SUMO2); alternate cross-link involves residue Lys-21. At Lys-25 the chain carries N6-(2-hydroxyisobutyryl)lysine. Residue Lys-35 is modified to N6-(2-hydroxyisobutyryl)lysine; alternate. Lys-35 carries the N6-(beta-hydroxybutyryl)lysine; alternate modification. The residue at position 35 (Lys-35) is an N6-crotonyllysine; alternate. Lys-35 carries the post-translational modification N6-glutaryllysine; alternate. Position 35 is an N6-succinyllysine; alternate (Lys-35). A Glycyl lysine isopeptide (Lys-Gly) (interchain with G-Cter in ubiquitin); alternate cross-link involves residue Lys-35. Position 36 is a polyADP-ribosyl glutamic acid (Glu-36). A Phosphoserine; by AMPK modification is found at Ser-37. An N6-(2-hydroxyisobutyryl)lysine; alternate mark is found at Lys-44, Lys-47, and Lys-58. Lys-44 is modified (N6-lactoyllysine; alternate). 2 positions are modified to N6-glutaryllysine; alternate: Lys-44 and Lys-47. Position 47 is an N6-methyllysine; alternate (Lys-47). N6,N6-dimethyllysine; alternate is present on Lys-58. Arg-80 is subject to Dimethylated arginine. Lys-86 carries the N6-(2-hydroxyisobutyryl)lysine; alternate modification. N6-acetyllysine; alternate is present on Lys-86. The residue at position 86 (Lys-86) is an N6-lactoyllysine; alternate. Lys-86 carries the N6,N6,N6-trimethyllysine; alternate modification. Residues Arg-87 and Arg-93 each carry the omega-N-methylarginine modification. Lys-109 is subject to N6-(2-hydroxyisobutyryl)lysine; alternate. Position 109 is an N6-lactoyllysine; alternate (Lys-109). Lys-109 bears the N6-glutaryllysine; alternate mark. Lys-109 carries the N6-methyllysine; alternate modification. O-linked (GlcNAc) serine glycosylation occurs at Ser-113. The residue at position 116 (Thr-116) is a Phosphothreonine. N6-(2-hydroxyisobutyryl)lysine; alternate occurs at positions 117 and 121. The residue at position 117 (Lys-117) is an N6-(beta-hydroxybutyryl)lysine; alternate. N6-lactoyllysine; alternate occurs at positions 117 and 121. 2 positions are modified to N6-glutaryllysine; alternate: Lys-117 and Lys-121. 2 positions are modified to N6-succinyllysine; alternate: Lys-117 and Lys-121. The residue at position 117 (Lys-117) is an N6-methylated lysine; alternate. Lys-121 is covalently cross-linked (Glycyl lysine isopeptide (Lys-Gly) (interchain with G-Cter in ubiquitin); alternate).

The protein belongs to the histone H2B family. As to quaternary structure, the nucleosome is a histone octamer containing two molecules each of H2A, H2B, H3 and H4 assembled in one H3-H4 heterotetramer and two H2A-H2B heterodimers. The octamer wraps approximately 147 bp of DNA. In terms of processing, monoubiquitination at Lys-35 (H2BK34Ub) by the MSL1/MSL2 dimer is required for histone H3 'Lys-4' (H3K4me) and 'Lys-79' (H3K79me) methylation and transcription activation at specific gene loci, such as HOXA9 and MEIS1 loci. Similarly, monoubiquitination at Lys-121 (H2BK120Ub) by the RNF20/40 complex gives a specific tag for epigenetic transcriptional activation and is also prerequisite for histone H3 'Lys-4' and 'Lys-79' methylation. It also functions cooperatively with the FACT dimer to stimulate elongation by RNA polymerase II. H2BK120Ub also acts as a regulator of mRNA splicing: deubiquitination by USP49 is required for efficient cotranscriptional splicing of a large set of exons. Post-translationally, phosphorylated on Ser-15 (H2BS14ph) by STK4/MST1 during apoptosis; which facilitates apoptotic chromatin condensation. Also phosphorylated on Ser-15 in response to DNA double strand breaks (DSBs), and in correlation with somatic hypermutation and immunoglobulin class-switch recombination. Phosphorylation at Ser-37 (H2BS36ph) by AMPK in response to stress promotes transcription. GlcNAcylation at Ser-113 promotes monoubiquitination of Lys-121. It fluctuates in response to extracellular glucose, and associates with transcribed genes. In terms of processing, ADP-ribosylated by PARP1 or PARP2 on Ser-7 (H2BS6ADPr) in response to DNA damage. H2BS6ADPr promotes recruitment of CHD1L. Mono-ADP-ribosylated on Glu-3 (H2BE2ADPr) by PARP3 in response to single-strand breaks. Poly ADP-ribosylation on Glu-36 (H2BE35ADPr) by PARP1 regulates adipogenesis: it inhibits phosphorylation at Ser-37 (H2BS36ph), thereby blocking expression of pro-adipogenetic genes. Post-translationally, crotonylation (Kcr) is specifically present in male germ cells and marks testis-specific genes in post-meiotic cells, including X-linked genes that escape sex chromosome inactivation in haploid cells. Crotonylation marks active promoters and enhancers and confers resistance to transcriptional repressors. It is also associated with post-meiotically activated genes on autosomes. Lactylated in macrophages by EP300/P300 by using lactoyl-CoA directly derived from endogenous or exogenous lactate, leading to stimulates gene transcription.

Its subcellular location is the nucleus. It localises to the chromosome. Functionally, core component of nucleosome. Nucleosomes wrap and compact DNA into chromatin, limiting DNA accessibility to the cellular machineries which require DNA as a template. Histones thereby play a central role in transcription regulation, DNA repair, DNA replication and chromosomal stability. DNA accessibility is regulated via a complex set of post-translational modifications of histones, also called histone code, and nucleosome remodeling. This is Histone H2B type 1-K from Macaca fascicularis (Crab-eating macaque).